A 197-amino-acid chain; its full sequence is Dephospho-CoA kinase (197 aa).

The DPCK domain maps to 2 to 197 (IIGLTGGIGS…HTKYMELLNE (196 aa)). An ATP-binding site is contributed by 10-15 (GSGKSA).

Belongs to the CoaE family.

Its subcellular location is the cytoplasm. It carries out the reaction 3'-dephospho-CoA + ATP = ADP + CoA + H(+). Its pathway is cofactor biosynthesis; coenzyme A biosynthesis; CoA from (R)-pantothenate: step 5/5. Functionally, catalyzes the phosphorylation of the 3'-hydroxyl group of dephosphocoenzyme A to form coenzyme A. The sequence is that of Dephospho-CoA kinase from Gamma-proteobacterium EBAC31A08.